We begin with the raw amino-acid sequence, 189 residues long: Interferon alpha-8 (189 aa).

Residues 1–23 (MALTFYLLVALVVLSYKSFSSLG) form the signal peptide. 2 disulfides stabilise this stretch: Cys24-Cys122 and Cys52-Cys162.

It belongs to the alpha/beta interferon family.

It is found in the secreted. Functionally, produced by macrophages, IFN-alpha have antiviral activities. Interferon stimulates the production of two enzymes: a protein kinase and an oligoadenylate synthetase. The sequence is that of Interferon alpha-8 (IFNA8) from Homo sapiens (Human).